The chain runs to 457 residues: Siroheme synthase 2 (457 aa).

Positions M1–T204 are precorrin-2 dehydrogenase /sirohydrochlorin ferrochelatase. NAD(+) contacts are provided by residues D22–V23 and L43–A44. S128 bears the Phosphoserine mark. The uroporphyrinogen-III C-methyltransferase stretch occupies residues G216–K457. P225 serves as a coordination point for S-adenosyl-L-methionine. Residue D248 is the Proton acceptor of the active site. K270 acts as the Proton donor in catalysis. S-adenosyl-L-methionine-binding positions include G301 to D303, I306, T331 to A332, M382, and G411.

The protein in the N-terminal section; belongs to the precorrin-2 dehydrogenase / sirohydrochlorin ferrochelatase family. It in the C-terminal section; belongs to the precorrin methyltransferase family.

It carries out the reaction uroporphyrinogen III + 2 S-adenosyl-L-methionine = precorrin-2 + 2 S-adenosyl-L-homocysteine + H(+). It catalyses the reaction precorrin-2 + NAD(+) = sirohydrochlorin + NADH + 2 H(+). The catalysed reaction is siroheme + 2 H(+) = sirohydrochlorin + Fe(2+). Its pathway is cofactor biosynthesis; adenosylcobalamin biosynthesis; precorrin-2 from uroporphyrinogen III: step 1/1. The protein operates within cofactor biosynthesis; adenosylcobalamin biosynthesis; sirohydrochlorin from precorrin-2: step 1/1. It functions in the pathway porphyrin-containing compound metabolism; siroheme biosynthesis; precorrin-2 from uroporphyrinogen III: step 1/1. It participates in porphyrin-containing compound metabolism; siroheme biosynthesis; siroheme from sirohydrochlorin: step 1/1. Its pathway is porphyrin-containing compound metabolism; siroheme biosynthesis; sirohydrochlorin from precorrin-2: step 1/1. Its function is as follows. Multifunctional enzyme that catalyzes the SAM-dependent methylations of uroporphyrinogen III at position C-2 and C-7 to form precorrin-2 via precorrin-1. Then it catalyzes the NAD-dependent ring dehydrogenation of precorrin-2 to yield sirohydrochlorin. Finally, it catalyzes the ferrochelation of sirohydrochlorin to yield siroheme. The polypeptide is Siroheme synthase 2 (Cronobacter sakazakii (strain ATCC BAA-894) (Enterobacter sakazakii)).